The primary structure comprises 338 residues: Large ribosomal subunit protein uL3 (338 aa).

Positions 230-258 (HRKGHRRTGTIGPQAPAVMFTQPRPGQMG) are disordered.

It belongs to the universal ribosomal protein uL3 family. Part of the 50S ribosomal subunit. Forms a cluster with proteins L14 and L24e.

In terms of biological role, one of the primary rRNA binding proteins, it binds directly near the 3'-end of the 23S rRNA, where it nucleates assembly of the 50S subunit. This is Large ribosomal subunit protein uL3 from Pyrobaculum aerophilum (strain ATCC 51768 / DSM 7523 / JCM 9630 / CIP 104966 / NBRC 100827 / IM2).